Here is a 349-residue protein sequence, read N- to C-terminus: Protein RecA (349 aa).

Residue 69-76 (GPESSGKT) participates in ATP binding.

The protein belongs to the RecA family.

It localises to the cytoplasm. Can catalyze the hydrolysis of ATP in the presence of single-stranded DNA, the ATP-dependent uptake of single-stranded DNA by duplex DNA, and the ATP-dependent hybridization of homologous single-stranded DNAs. It interacts with LexA causing its activation and leading to its autocatalytic cleavage. This is Protein RecA from Crocosphaera subtropica (strain ATCC 51142 / BH68) (Cyanothece sp. (strain ATCC 51142)).